The sequence spans 408 residues: CST complex subunit STN1 (408 aa).

The interval 8–195 is interaction with CTC1; it reads MQCESSPKEE…KVYDQPFRNP (188 aa). The OB DNA-binding region spans 64–165; the sequence is VDIMGAVISV…EICATIYYKV (102 aa). Winged helix-turn-helix (wHTH) stretches follow at residues 201-304 and 305-408; these read EALN…YVTS and KDKD…YTAF.

Belongs to the STN1 family. Component of the CST complex, composed of TEN1/C17orf106, CTC1/C17orf68 and STN1; in the complex interacts directly with TEN1 and CTC1. Interacts with ACD/TPP1, POT1 and POLA1.

It is found in the nucleus. The protein localises to the chromosome. Its subcellular location is the telomere. Its function is as follows. Component of the CST complex proposed to act as a specialized replication factor promoting DNA replication under conditions of replication stress or natural replication barriers such as the telomere duplex. The CST complex binds single-stranded DNA with high affinity in a sequence-independent manner, while isolated subunits bind DNA with low affinity by themselves. Initially the CST complex has been proposed to protect telomeres from DNA degradation. However, the CST complex has been shown to be involved in several aspects of telomere replication. The CST complex inhibits telomerase and is involved in telomere length homeostasis; it is proposed to bind to newly telomerase-synthesized 3' overhangs and to terminate telomerase action implicating the association with the ACD:POT1 complex thus interfering with its telomerase stimulation activity. The CST complex is also proposed to be involved in fill-in synthesis of the telomeric C-strand probably implicating recruitment and activation of DNA polymerase alpha. The CST complex facilitates recovery from many forms of exogenous DNA damage; seems to be involved in the re-initiation of DNA replication at repaired forks and/or dormant origins. Required for efficicient replication of the duplex region of the telomere. Promotes efficient replication of lagging-strand telomeres. Promotes general replication start following replication-fork stalling implicating new origin firing. May be in involved in C-strand fill-in during late S/G2 phase independent of its role in telomere duplex replication. The polypeptide is CST complex subunit STN1 (Rattus norvegicus (Rat)).